We begin with the raw amino-acid sequence, 219 residues long: Ion-translocating oxidoreductase complex subunit G (219 aa).

Residues 25 to 45 (GLLLGLFSLVSALMLALASDA) traverse the membrane as a helical segment. Position 187 is an FMN phosphoryl threonine (Thr187).

Belongs to the RnfG family. In terms of assembly, the complex is composed of six subunits: RnfA, RnfB, RnfC, RnfD, RnfE and RnfG. It depends on FMN as a cofactor.

The protein resides in the cellular chromatophore membrane. Its function is as follows. Part of a membrane-bound complex that couples electron transfer with translocation of ions across the membrane. This is Ion-translocating oxidoreductase complex subunit G from Cereibacter sphaeroides (strain ATCC 17023 / DSM 158 / JCM 6121 / CCUG 31486 / LMG 2827 / NBRC 12203 / NCIMB 8253 / ATH 2.4.1.) (Rhodobacter sphaeroides).